Here is a 393-residue protein sequence, read N- to C-terminus: Stearoyl-[acyl-carrier-protein] 9-desaturase, chloroplastic (393 aa).

The N-terminal 30 residues, 1–30 (MALNINGVSLKSHKMLPFPCSSARSERVFM), are a transit peptide targeting the chloroplast. Fe cation-binding residues include Glu-135, Glu-173, His-176, Glu-259, and His-262.

This sequence belongs to the fatty acid desaturase type 2 family. Homodimer. Fe(2+) is required as a cofactor.

The protein resides in the plastid. Its subcellular location is the chloroplast. It catalyses the reaction octadecanoyl-[ACP] + 2 reduced [2Fe-2S]-[ferredoxin] + O2 + 2 H(+) = (9Z)-octadecenoyl-[ACP] + 2 oxidized [2Fe-2S]-[ferredoxin] + 2 H2O. It participates in lipid metabolism; fatty acid metabolism. Functionally, converts stearoyl-ACP to oleoyl-ACP by introduction of a cis double bond between carbons 9 and 10 of the acyl chain. This Solanum tuberosum (Potato) protein is Stearoyl-[acyl-carrier-protein] 9-desaturase, chloroplastic.